A 215-amino-acid polypeptide reads, in one-letter code: Small ribosomal subunit protein uS3 (215 aa).

A KH type-2 domain is found at 39–109; the sequence is IRKFIKKRLE…EVLVDVKEVK (71 aa).

Belongs to the universal ribosomal protein uS3 family. Part of the 30S ribosomal subunit. Forms a tight complex with proteins S10 and S14.

Binds the lower part of the 30S subunit head. Binds mRNA in the 70S ribosome, positioning it for translation. The sequence is that of Small ribosomal subunit protein uS3 from Methylacidiphilum infernorum (isolate V4) (Methylokorus infernorum (strain V4)).